The following is a 256-amino-acid chain: Ethylene-responsive transcription factor ERF084 (256 aa).

Positions 115–172 (GFMGVRKRPWGRWSAEIRDRIGRCRHWLGTFDTAEEAARAYDAAARRLRGTKAKTNFV) form a DNA-binding region, AP2/ERF.

This sequence belongs to the AP2/ERF transcription factor family. ERF subfamily.

It is found in the nucleus. Probably acts as a transcriptional activator. Binds to the GCC-box pathogenesis-related promoter element. May be involved in the regulation of gene expression by stress factors and by components of stress signal transduction pathways. This chain is Ethylene-responsive transcription factor ERF084 (ERF084), found in Arabidopsis thaliana (Mouse-ear cress).